A 214-amino-acid chain; its full sequence is Probable DNA (cytosine-5)-methyltransferase (214 aa).

C62 is an active-site residue.

Belongs to the class I-like SAM-binding methyltransferase superfamily. C5-methyltransferase family. In terms of assembly, probably requires another subunit for function.

The catalysed reaction is a 2'-deoxycytidine in DNA + S-adenosyl-L-methionine = a 5-methyl-2'-deoxycytidine in DNA + S-adenosyl-L-homocysteine + H(+). Functionally, this is probably the methylase that recognizes and modifies 5'-CpG-3'. The chain is Probable DNA (cytosine-5)-methyltransferase from Dryophytes versicolor (chameleon treefrog).